The chain runs to 651 residues: Translation factor GUF1 homolog, mitochondrial (651 aa).

The N-terminal 26 residues, 1–26 (MAVTRAAAPMVGNCSSAMLIIGRRYF), are a transit peptide targeting the mitochondrion. Residues 51-228 (KKIRNFGIVA…AVVERLPPPK (178 aa)) form the tr-type G domain. GTP contacts are provided by residues 60-67 (AHVDHGKS), 121-125 (DTPGH), and 175-178 (NKVD).

This sequence belongs to the TRAFAC class translation factor GTPase superfamily. Classic translation factor GTPase family. LepA subfamily.

Its subcellular location is the mitochondrion inner membrane. The enzyme catalyses GTP + H2O = GDP + phosphate + H(+). Its function is as follows. Promotes mitochondrial protein synthesis. May act as a fidelity factor of the translation reaction, by catalyzing a one-codon backward translocation of tRNAs on improperly translocated ribosomes. Binds to mitochondrial ribosomes in a GTP-dependent manner. The chain is Translation factor GUF1 homolog, mitochondrial from Brugia malayi (Filarial nematode worm).